Here is a 449-residue protein sequence, read N- to C-terminus: NADP-specific glutamate dehydrogenase (449 aa).

Residue lysine 125 is part of the active site.

Belongs to the Glu/Leu/Phe/Val dehydrogenases family. In terms of assembly, homohexamer.

The enzyme catalyses L-glutamate + NADP(+) + H2O = 2-oxoglutarate + NH4(+) + NADPH + H(+). In Giardia intestinalis (Giardia lamblia), this protein is NADP-specific glutamate dehydrogenase.